The chain runs to 303 residues: Golgi to ER traffic protein 2 (303 aa).

At 1–168 (MSEQPLSQDE…NAYNIYQQRL (168 aa)) the chain is on the cytoplasmic side. A disordered region spans residues 19–86 (RQAKMARGKA…DPEDDPDLMD (68 aa)). The span at 31–48 (RLNNILSQGSSVKGTTDP) shows a compositional bias: polar residues. The helical transmembrane segment at 169 to 189 (WKFRFSIIRFAAVLTNFFYHY) threads the bilayer. Over 190–216 (LTIQDYSFTSSPHFYVRALAPHPAVNS) the chain is Lumenal. Residues 217-236 (FITWFSTCEVAILASFYLIT) form a helical membrane-spanning segment. The Cytoplasmic portion of the chain corresponds to 237–280 (SKNNIYANASDGNLLLKGISMGAMVLPQLRAYQPLVIRLAHYWE). A helical transmembrane segment spans residues 281–301 (VFSMLLGDIFLVVVLFGLVSI). Topologically, residues 302-303 (YN) are lumenal.

It belongs to the GET2 family. As to quaternary structure, component of the Golgi to ER traffic (GET) complex, which is composed of GET1, GET2 and GET3. Within the complex, GET1 and GET2 form a heterotetramer which is stabilized by phosphatidylinositol binding and which binds to the GET3 homodimer.

It is found in the endoplasmic reticulum membrane. Its subcellular location is the golgi apparatus membrane. In terms of biological role, required for the post-translational delivery of tail-anchored (TA) proteins to the endoplasmic reticulum. Together with GET1, acts as a membrane receptor for soluble GET3, which recognizes and selectively binds the transmembrane domain of TA proteins in the cytosol. The GET complex cooperates with the HDEL receptor ERD2 to mediate the ATP-dependent retrieval of resident ER proteins that contain a C-terminal H-D-E-L retention signal from the Golgi to the ER. The polypeptide is Golgi to ER traffic protein 2 (Debaryomyces hansenii (strain ATCC 36239 / CBS 767 / BCRC 21394 / JCM 1990 / NBRC 0083 / IGC 2968) (Yeast)).